A 100-amino-acid chain; its full sequence is UPF0213 protein YhbQ (100 aa).

The region spanning 2-77 (TPWFLYLIRT…KQLTKRQKER (76 aa)) is the GIY-YIG domain.

This sequence belongs to the UPF0213 family.

In Escherichia coli O1:K1 / APEC, this protein is UPF0213 protein YhbQ.